Consider the following 329-residue polypeptide: Two pore potassium channel protein sup-9 (329 aa).

Topologically, residues 1 to 8 (MKRQNIRT) are cytoplasmic. A helical transmembrane segment spans residues 9–29 (LSLIVCTLTYLLVGAAVFDAL). An N-linked (GlcNAc...) asparagine glycan is attached at asparagine 53. The segment at residues 80-100 (FSGAFYFATTVITTIGYGHST) is an intramembrane region (pore-forming). The short motif at 93–98 (TIGYGH) is the Selectivity filter element. Residues 108–128 (VFCMLYALAGIPLGLIMFQSI) form a helical membrane-spanning segment. Residues 129–157 (GERMNTFAAKLLRFIRRAAGKQPIVTSSD) are Cytoplasmic-facing. A helical transmembrane segment spans residues 158–178 (LIIFCTGWGGLLIFGGAFMFS). Asparagine 182 is a glycosylation site (N-linked (GlcNAc...) asparagine). Residues 186–206 (FDAVYYCFVTLTTIGFGDYVA) constitute an intramembrane region (pore-forming). Positions 198-203 (TIGFGD) match the Selectivity filter motif. A helical transmembrane segment spans residues 220–240 (VFFSLVFILFGLTVISAAMNL). Over 241–329 (LVLRFLTMNT…FSGMTTRPKY (89 aa)) the chain is Cytoplasmic. A may be important for regulation by and/or interaction with sup-10 region spans residues 289–296 (SLASCSCY). Residues 307–329 (HRKHTEPHGGPPTFSGMTTRPKY) are disordered.

The protein belongs to the two pore domain potassium channel (TC 1.A.1.8) family. May form a complex with the regulatory subunits unc-93 and sup-10. In terms of tissue distribution, low levels along surface of body-wall muscle cells, in vulval and intestinal muscles and, more weakly, in anal depressor and sphincter muscles. Also expressed in a subset of head neurons.

The protein resides in the membrane. In terms of biological role, potassium channel involved in coordination of muscle contraction. Activity is regulated by sup-18. The sequence is that of Two pore potassium channel protein sup-9 from Caenorhabditis elegans.